The sequence spans 299 residues: Oxygen-dependent coproporphyrinogen-III oxidase (299 aa).

Ser-92 provides a ligand contact to substrate. 2 residues coordinate a divalent metal cation: His-96 and His-106. His-106 functions as the Proton donor in the catalytic mechanism. 108-110 (NVR) serves as a coordination point for substrate. Residues His-145 and His-175 each contribute to the a divalent metal cation site. An important for dimerization region spans residues 240–275 (YVEFNLVWDRGTLFGLQTGGRTESILMSMPPLVRWE). 258-260 (GGR) serves as a coordination point for substrate.

It belongs to the aerobic coproporphyrinogen-III oxidase family. In terms of assembly, homodimer. Requires a divalent metal cation as cofactor.

It localises to the cytoplasm. The catalysed reaction is coproporphyrinogen III + O2 + 2 H(+) = protoporphyrinogen IX + 2 CO2 + 2 H2O. It functions in the pathway porphyrin-containing compound metabolism; protoporphyrin-IX biosynthesis; protoporphyrinogen-IX from coproporphyrinogen-III (O2 route): step 1/1. In terms of biological role, involved in the heme biosynthesis. Catalyzes the aerobic oxidative decarboxylation of propionate groups of rings A and B of coproporphyrinogen-III to yield the vinyl groups in protoporphyrinogen-IX. This chain is Oxygen-dependent coproporphyrinogen-III oxidase, found in Salmonella choleraesuis (strain SC-B67).